The primary structure comprises 140 residues: Proline-rich nuclear receptor coactivator 2 (140 aa).

The disordered stretch occupies residues 1–81 (MGGGERYNIP…NSNWNAGLSS (81 aa)). Composition is skewed to polar residues over residues 11–38 (DPQS…SQTK) and 59–81 (AMQN…GLSS). The short motif at 100 to 106 (SEPPSPS) is the SH3-binding element.

This sequence belongs to the PNRC family. PNRC2 subfamily. In terms of assembly, interacts with UPF1/RENT1; preferentially interacts with hyperphosphorylated form. Interacts with DCP1A. Interacts with many nuclear receptors including ESR1, ESRRA, ESRRG, NR3C1/GR, NR5A1, PGR, TR, RAR and RXR. Strong expression is detected in lung, spleen, ovary, thymus, and colon.

The protein resides in the nucleus. It localises to the cytoplasm. Its subcellular location is the P-body. In terms of biological role, involved in nonsense-mediated mRNA decay (NMD) by acting as a bridge between the mRNA decapping complex and the NMD machinery. May act by targeting the NMD machinery to the P-body and recruiting the decapping machinery to aberrant mRNAs. Required for UPF1/RENT1 localization to the P-body. Plays a role in glucocorticoid receptor-mediated mRNA degradation by interacting with the glucocorticoid receptor NR3C1 in a ligand-dependent manner when it is bound to the 5' UTR of target mRNAs and recruiting the RNA helicase UPF1 and the mRNA-decapping enzyme DCP1A, leading to RNA decay. Also acts as a nuclear receptor coactivator. May play a role in controlling the energy balance between energy storage and energy expenditure. The chain is Proline-rich nuclear receptor coactivator 2 (Pnrc2) from Mus musculus (Mouse).